Reading from the N-terminus, the 859-residue chain is MYILVWKKGQQIKTFHTLDEAAQFKAASNIDEAQMFSVTVAPAISASGGSNEATNLRRLMYLSKSTNPEECNPQFLAEMARVATIRNREIGVSGFLMYSSPFFFQVIEGTDEDLDFLFAKISADPRHERCIVLANGPCTGRMYGDWHMKDSHMDSITTHPAMKTILYQIARSFSSMWSYLPKSAGNMLLLGKDPAAQPPEPMSVVVTFIYLVEFGSILSNPNLTEQAAEVLSTFVDVCVKNVEGSGGNIAKFITGICMAYWPINRTEEALTAIQQISEDLAQLRSQQAPGSAVSLMYSQAGVHYGRAMLCNAGSRKSDFTLLGDCINTTSRIATLAKKLKTPLLFSFEVRCLLGDEMREEIEGAGMHQVKGRDKPVVVYQFPGPELDVEMVRQKIEQFTPGRFRCQMPVVEYEALPISQRPPIFDDTPKGNPRPRTPGYGGRQRSDSLVDRLIMIAKLAGPSVSATGDTTLTTLTYISQATRPMSRLDLSAIMRTATRRNAQQSITGTLLHVNGLFVQTLEGPKDAVVNLYLRIRQDPRHTDVTTVHMAPLQERVYPSEWTLTSATEEMLATFPPLQDVLSQLAKSFTSLETYVPSTVVRYLTAGNNPRNLMPVSCGVVMLATDICSFTSLTEKSSLTEVWMICNTFIDACTSAICQEGGEVIKLIGDCVTAYFPGNNADSAVAAAQELFTFCRQLREAFVDVLDVRGCVSCGVGLDYGQVVMAQCGSLGLTEYVVAGAVSARVMEVEAITREVGYAIVVTEPVADRLSPQLRDHGIVPTPQAIEGLPCYGIAGEEFELDVDSIKRGIKALHAARSGEKPLTEPEEAKPDFRVSPGRVRHGDSGRRSNSAQGKRSIQVR.

The BLUF 1 domain maps to 56–149 (LRRLMYLSKS…GRMYGDWHMK (94 aa)). One can recognise a Guanylate cyclase 1 domain in the interval 205–333 (VVTFIYLVEF…DCINTTSRIA (129 aa)). The interval 420-443 (RPPIFDDTPKGNPRPRTPGYGGRQ) is disordered. The region spanning 471–563 (LTTLTYISQA…RVYPSEWTLT (93 aa)) is the BLUF 2 domain. One can recognise a Guanylate cyclase 2 domain in the interval 619-748 (VMLATDICSF…AVSARVMEVE (130 aa)). The segment at 813–859 (AARSGEKPLTEPEEAKPDFRVSPGRVRHGDSGRRSNSAQGKRSIQVR) is disordered. Residues 815-831 (RSGEKPLTEPEEAKPDF) show a composition bias toward basic and acidic residues. Residues 846-859 (RSNSAQGKRSIQVR) are compositionally biased toward polar residues.

It belongs to the adenylyl cyclase class-4/guanylyl cyclase family. As to quaternary structure, heterotetramer of two alpha and two beta subunits. The cofactor is FAD.

It is found in the cell projection. The protein localises to the cilium. It localises to the flagellum. The enzyme catalyses ATP = 3',5'-cyclic AMP + diphosphate. Its activity is regulated as follows. Activity increased by up to 80-fold under blue light. Its function is as follows. Acts as a blue light photoreceptor for the step-up photophobic response. Mediates photoavoidance. This chain is Photoactivated adenylate cyclase subunit beta, found in Euglena gracilis.